Reading from the N-terminus, the 202-residue chain is Dephospho-CoA kinase (202 aa).

In terms of domain architecture, DPCK spans 5 to 202; sequence ILGLTGGIGS…FYLTLRGGQP (198 aa). 13–18 is an ATP binding site; sequence GSGKSA.

Belongs to the CoaE family.

The protein localises to the cytoplasm. It catalyses the reaction 3'-dephospho-CoA + ATP = ADP + CoA + H(+). Its pathway is cofactor biosynthesis; coenzyme A biosynthesis; CoA from (R)-pantothenate: step 5/5. Functionally, catalyzes the phosphorylation of the 3'-hydroxyl group of dephosphocoenzyme A to form coenzyme A. This Stutzerimonas stutzeri (Pseudomonas stutzeri) protein is Dephospho-CoA kinase.